The primary structure comprises 225 residues: tRNA (guanine-N(7)-)-methyltransferase (225 aa).

The S-adenosyl-L-methionine site is built by glutamate 56, glutamate 81, aspartate 108, and aspartate 131. Residue aspartate 131 is part of the active site. Residues lysine 135, aspartate 167, and 204-207 (TKFE) each bind substrate.

This sequence belongs to the class I-like SAM-binding methyltransferase superfamily. TrmB family.

It catalyses the reaction guanosine(46) in tRNA + S-adenosyl-L-methionine = N(7)-methylguanosine(46) in tRNA + S-adenosyl-L-homocysteine. It participates in tRNA modification; N(7)-methylguanine-tRNA biosynthesis. Functionally, catalyzes the formation of N(7)-methylguanine at position 46 (m7G46) in tRNA. This Legionella pneumophila (strain Lens) protein is tRNA (guanine-N(7)-)-methyltransferase.